Consider the following 328-residue polypeptide: tRNA uridine(34) hydroxylase (328 aa).

The Rhodanese domain occupies 130–224; sequence LDEDTIVLDT…YGKDPEVQGE (95 aa). Cysteine 184 functions as the Cysteine persulfide intermediate in the catalytic mechanism.

Belongs to the TrhO family.

The catalysed reaction is uridine(34) in tRNA + AH2 + O2 = 5-hydroxyuridine(34) in tRNA + A + H2O. Catalyzes oxygen-dependent 5-hydroxyuridine (ho5U) modification at position 34 in tRNAs. This Streptococcus uberis (strain ATCC BAA-854 / 0140J) protein is tRNA uridine(34) hydroxylase.